Here is a 652-residue protein sequence, read N- to C-terminus: Na(+)/H(+) antiporter NhaA 3 (652 aa).

Residues 1-428 (MTGEIPRGRR…GASLTTWLVF (428 aa)) form a na(+)/H(+) antiporter NhaA region. 11 consecutive transmembrane segments (helical) span residues 32-52 (ETGSARVLLAAAVVALAWVNL), 78-98 (LRFWVNSGLMTFFFLVIGLEV), 114-134 (MLPLLAGIGGILAPIAIYLAF), 142-162 (VGWGVVMATDTALALGMLAVL), 173-193 (FLLTVAVVDDLIVIVVLAIAY), 200-220 (MALFVAAGIFALVLLIRAAGV), 227-249 (LLLGVAAWLAVSESGVDPVVVGL), 306-326 (HPWASYLIVPLFALANVGVVV), 342-362 (GVLFAYVVGKPAGIVIASMLV), 376-396 (WAAIIGVGTVSGIGFTIALLI), and 411-431 (VGILVATVGASLTTWLVFRLA). The region spanning 429 to 623 (RLAARLAPAR…LSAAVMSAFA (195 aa)) is the Thioredoxin domain. Positions 626–652 (RLRPEGGREPDHRSEAGSEQPDEEPGT) are disordered. Over residues 627 to 641 (LRPEGGREPDHRSEA) the composition is skewed to basic and acidic residues.

It in the N-terminal section; belongs to the NhaA Na(+)/H(+) (TC 2.A.33) antiporter family.

The protein localises to the cell membrane. It catalyses the reaction Na(+)(in) + 2 H(+)(out) = Na(+)(out) + 2 H(+)(in). Its function is as follows. Na(+)/H(+) antiporter that extrudes sodium in exchange for external protons. The chain is Na(+)/H(+) antiporter NhaA 3 from Salinispora tropica (strain ATCC BAA-916 / DSM 44818 / JCM 13857 / NBRC 105044 / CNB-440).